The sequence spans 129 residues: Transcriptional activator protein (129 aa).

Residues 1-20 (MRSSSPSQPPSIKRAHRQAK) are disordered. The Nuclear localization signal motif lies at 13–28 (KRAHRQAKKRAIRRRR). Residues 33-50 (CGCSIYFHLGCAGHGFTH) fold into a zinc finger. The interval 73-118 (LFQDTQSRGPTVYQNEGIPRTDTVQPQPEESVASPQSLPELPSLDD) is disordered. Polar residues-rich tracts occupy residues 74-86 (FQDT…TVYQ) and 94-109 (DTVQ…SPQS). Serine 109 is modified (phosphoserine; by host). The interval 115-129 (SLDDVDDSFWINLFS) is transactivation.

The protein belongs to the geminiviridae transcriptional activator protein family. As to quaternary structure, monomer. Homodimer. Homooligomer. Self-interaction correlates with nuclear localization and efficient activation of transcription. Monomers suppress local silencing by interacting with and inactivating host adenosine kinase 2 (ADK2) in the cytoplasm. Interacts with and inhibits host SNF1 kinase. Post-translationally, phosphorylated at Ser-109 by A.thaliana KIN10.

It localises to the host nucleus. It is found in the host cytoplasm. In terms of biological role, strong activator of the late viral genes promoters. Enhances the expression of the capsid protein and nuclear shuttle protein. Acts as a suppressor of RNA-mediated gene silencing, also known as post-transcriptional gene silencing (PTGS), a mechanism of plant viral defense that limits the accumulation of viral RNAs. Suppresses the host RNA silencing by inhibiting adenosine kinase 2 (ADK2), a kinase involved in a general methylation pathway. Also suppresses the host basal defense by interacting with and inhibiting SNF1 kinase, a key regulator of cell metabolism implicated in innate antiviral defense. Determines pathogenicity. In Nicotiana tabacum (Common tobacco), this protein is Transcriptional activator protein.